We begin with the raw amino-acid sequence, 522 residues long: Transactivator/viroplasmin protein (522 aa).

Over residues 111-126 (QGIQIPQKSEPNSSVA) the composition is skewed to polar residues. Disordered stretches follow at residues 111–133 (QGIQ…AESG) and 491–522 (SADS…KASG).

The protein belongs to the caulimoviridae viroplasmin family.

It is found in the host cytoplasm. Functionally, enhances the ribosomal termination-reinitiation event leading to the translation of major open reading frames on the polycistronic viral RNAs. This chain is Transactivator/viroplasmin protein, found in Arabidopsis thaliana (Mouse-ear cress).